Here is a 380-residue protein sequence, read N- to C-terminus: Cytochrome b (380 aa).

The next 4 membrane-spanning stretches (helical) occupy residues 34–54 (FGSLLGICLMTQILTGLLLAM), 78–99 (WLIRNLHANGASFFFICIYFHI), 114–134 (WNTGVILLLTLMATAFVGYVL), and 179–199 (FFALHFLLPFLIAGLTLIHLT). Heme b is bound by residues His-84 and His-98. His-183 and His-197 together coordinate heme b. Position 202 (His-202) interacts with a ubiquinone. A run of 4 helical transmembrane segments spans residues 227–247 (LKDILGFTLMFLPLTTLALFS), 289–309 (LGGVLALAASVLILFLIPFLH), 321–341 (ISQLLFWILVANLLILTWVGS), and 348–368 (FIIIGQLASITYFTILLVLFP).

It belongs to the cytochrome b family. In terms of assembly, the cytochrome bc1 complex contains 11 subunits: 3 respiratory subunits (MT-CYB, CYC1 and UQCRFS1), 2 core proteins (UQCRC1 and UQCRC2) and 6 low-molecular weight proteins (UQCRH/QCR6, UQCRB/QCR7, UQCRQ/QCR8, UQCR10/QCR9, UQCR11/QCR10 and a cleavage product of UQCRFS1). This cytochrome bc1 complex then forms a dimer. The cofactor is heme b.

The protein resides in the mitochondrion inner membrane. Functionally, component of the ubiquinol-cytochrome c reductase complex (complex III or cytochrome b-c1 complex) that is part of the mitochondrial respiratory chain. The b-c1 complex mediates electron transfer from ubiquinol to cytochrome c. Contributes to the generation of a proton gradient across the mitochondrial membrane that is then used for ATP synthesis. The sequence is that of Cytochrome b (MT-CYB) from Pachyptila turtur (Fairy prion).